A 161-amino-acid polypeptide reads, in one-letter code: Large ribosomal subunit protein uL29c (161 aa).

A chloroplast-targeting transit peptide spans 1-61; the sequence is MATMSLAAAS…ERRAAAMVAM (61 aa).

This sequence belongs to the universal ribosomal protein uL29 family. As to quaternary structure, part of the 50S ribosomal subunit.

It is found in the plastid. Its subcellular location is the chloroplast. The chain is Large ribosomal subunit protein uL29c (RPL29) from Zea mays (Maize).